A 161-amino-acid chain; its full sequence is Chorion class B protein L12 (161 aa).

Residues 1 to 21 (MAAKLILFVCATALVAQSVLS) form the signal peptide. The interval 22 to 52 (IGCGCGGRGYGGLGYGGLGYGGLGGGCGRGF) is left arm. 3 tandem repeats follow at residues 30 to 34 (GYGGL), 35 to 39 (GYGGL), and 40 to 44 (GYGGL). A 3 X 5 AA tandem repeats of G-Y-G-G-L region spans residues 30 to 44 (GYGGLGYGGLGYGGL). The interval 53–121 (SGGGLPVATA…GNGAVGITRE (69 aa)) is central domain. The segment at 122–161 (GGFGYGAGYGDGYGLGFGGYGGGYGLGNGGYGGCGCGWGY) is right arm (Gly-rich tandem repeats).

The protein belongs to the chorion protein family.

Functionally, this protein is one of many from the eggshell of the silk moth. This is Chorion class B protein L12 from Bombyx mori (Silk moth).